The following is a 570-amino-acid chain: Urease subunit alpha (570 aa).

Residues 132-570 (GGIDTHVHFI…LPMAQRYFLF (439 aa)) form the Urease domain. Ni(2+)-binding residues include His-137 and His-139. Positions 139 and 170 each coordinate substrate. Lys-220 provides a ligand contact to Ni(2+). Lys-220 carries the post-translational modification N6-carboxylysine. Substrate-binding residues include His-222 and His-249. Ni(2+) contacts are provided by His-249 and His-275. The active-site Proton donor is the His-323. Asp-363 provides a ligand contact to Ni(2+). Ala-366 serves as a coordination point for substrate.

The protein belongs to the metallo-dependent hydrolases superfamily. Urease alpha subunit family. Heterotrimer of UreA (gamma), UreB (beta) and UreC (alpha) subunits. Three heterotrimers associate to form the active enzyme. It depends on Ni cation as a cofactor. In terms of processing, carboxylation allows a single lysine to coordinate two nickel ions.

Its subcellular location is the cytoplasm. The catalysed reaction is urea + 2 H2O + H(+) = hydrogencarbonate + 2 NH4(+). The protein operates within nitrogen metabolism; urea degradation; CO(2) and NH(3) from urea (urease route): step 1/1. With respect to regulation, inhibited by fluoride. In Sporosarcina pasteurii (Bacillus pasteurii), this protein is Urease subunit alpha.